The following is a 121-amino-acid chain: UPF0212 protein VNG_0879C (121 aa).

It belongs to the UPF0212 family.

This is UPF0212 protein VNG_0879C from Halobacterium salinarum (strain ATCC 700922 / JCM 11081 / NRC-1) (Halobacterium halobium).